The sequence spans 688 residues: Phosphatidylinositol 4-phosphate 5-kinase type-1 gamma (688 aa).

Positions 48 to 71 (GQPGPGHGKKLGHRGVDASGETTY) are disordered. Residues 75–443 (TSSTLKGAIQ…RFFKFMSSTV (369 aa)) enclose the PIPK domain. An N6-acetyllysine mark is found at Lys265 and Lys268. An Asymmetric dimethylarginine; alternate modification is found at Arg459. Arg459 carries the post-translational modification Omega-N-methylarginine; alternate. Residues 525–534 (TTLSSTSLSI) show a composition bias toward low complexity. Disordered regions lie at residues 525-565 (TTLS…QEEL) and 592-629 (GAGVEVPPSGASAAATVEVDAASQASEPASQASDEEDA). Position 554 is a phosphoserine (Ser554). Over residues 602–623 (ASAAATVEVDAASQASEPASQA) the composition is skewed to low complexity. Tyr635 carries the post-translational modification Phosphotyrosine; by EGFR. Position 671 is a phosphotyrosine; by CSK (Tyr671). Ser672 bears the Phosphoserine; by CDK5, MAPK1 and CDK1 mark. Ser682 and Ser686 each carry phosphoserine. At Thr688 the chain carries Phosphothreonine.

As to quaternary structure, interacts with TLN1. Interacts with TLN2; interaction stimulates 1-phosphatidylinositol-4-phosphate 5-kinase activity. May compete with beta-integrins for the same binding site on TLN1 and TLN2. Interacts with ARF6; interaction stimulates 1-phosphatidylinositol-4-phosphate 5-kinase activity. Interacts with AP2B1. Interacts with AP2M1; phosphorylation of PIP5K1C by CSK disrupts the interaction; clathrin competes with PIP5K1C. Interacts with CDH1. Interacts with CSK. Interacts with PLCG1; interaction is abolished upon EGF stimulation. Interacts with LAPTM4B; promotes SNX5 association with LAPTM4B; kinase activity of PIP5K1C is required; interaction is regulated by phosphatidylinositol 4,5-bisphosphate generated by PIP5K1C. Phosphorylation on Ser-672 negatively regulates binding to TLN2 and is strongly stimulated in mitosis. Phosphorylation on Tyr-671 is necessary for targeting to focal adhesions. Phosphorylation on Ser-672 and Tyr-671 are mutually exclusive. Phosphorylated by SYK and CSK. Tyrosine phosphorylation is enhanced by PTK2 signaling. Phosphorylated at Tyr-635 upon EGF stimulation. Some studies suggest that phosphorylation on Tyr-671 enhances binding to tailins (TLN1 and TLN2); others that phosphorylation at Tyr-671 does not directly enhance binding to tailins (TLN1 and TLN2) but may act indirectly by inhibiting phosphorylation at Ser-672. In terms of processing, acetylation at Lys-265 and Lys-268 seems to decrease lipid kinase activity. Deacetylation of these sites by SIRT1 positively regulates the exocytosis of TSH-containing granules from pituitary cells.

It localises to the cell membrane. Its subcellular location is the endomembrane system. It is found in the cytoplasm. The protein localises to the cell junction. The protein resides in the focal adhesion. It localises to the adherens junction. Its subcellular location is the cell projection. It is found in the ruffle membrane. The protein localises to the phagocytic cup. The protein resides in the uropodium. The catalysed reaction is a 1,2-diacyl-sn-glycero-3-phospho-(1D-myo-inositol 4-phosphate) + ATP = a 1,2-diacyl-sn-glycero-3-phospho-(1D-myo-inositol-4,5-bisphosphate) + ADP + H(+). It catalyses the reaction 1-octadecanoyl-2-(5Z,8Z,11Z,14Z)-eicosatetraenoyl-sn-glycero-3-phospho-1D-myo-inositol 4-phosphate + ATP = 1-octadecanoyl-2-(5Z,8Z,11Z,14Z)-eicosatetraenoyl-sn-glycero-3-phospho-1D-myo-inositol 4,5-bisphosphate + ADP + H(+). It carries out the reaction 1-octadecanoyl-2-(9Z)-octadecenoyl-sn-glycero-3-phospho-1D-myo-inositol 4-phosphate + ATP = 1-octadecanoyl-2-(9Z)-octadecenoyl-sn-glycero-3-phospho-1D-myo-inositol 4,5-bisphosphate + ADP + H(+). The enzyme catalyses 1-octadecanoyl-2-(9Z)-octadecenoyl-sn-glycero-3-phospho-1D-myo-inositol + ATP = 1-octadecanoyl-2-(9Z)-octadecenoyl-sn-glycero-3-phospho-1D-myo-inositol 5-phosphate + ADP + H(+). The catalysed reaction is 1-octadecanoyl-2-(9Z,12Z)-octadecadienoyl-sn-glycero-3-phospho-1D-myo-inositol + ATP = 1-octadecanoyl-2-(9Z,12Z)-octadecadienoyl-sn-glycero-3-phospho-1D-myo-inositol 5-phosphate + ADP + H(+). It catalyses the reaction 1-octadecanoyl-2-(5Z,8Z,11Z,14Z-eicosatetraenoyl)-sn-glycero-3-phospho-(1D-myo-inositol) + ATP = 1-octadecanoyl-2-(5Z,8Z,11Z,14Z)-eicosatetraenoyl-sn-glycero-3-phospho-1D-myo-inositol 5-phosphate + ADP + H(+). It carries out the reaction 1,2-di-(9Z,12Z)-octadecadienoyl-sn-glycero-3-phospho-1D-myo-inositol + ATP = 1,2-di(9Z,12Z)-octadecadienoyl-sn-glycero-3-phospho-1D-myo-inositol 5-phosphate + ADP + H(+). Catalyzes the phosphorylation of phosphatidylinositol 4-phosphate (PtdIns(4)P/PI4P) to form phosphatidylinositol 4,5-bisphosphate (PtdIns(4,5)P2/PIP2), a lipid second messenger that regulates several cellular processes such as signal transduction, vesicle trafficking, actin cytoskeleton dynamics, cell adhesion, and cell motility. PtdIns(4,5)P2 can directly act as a second messenger or can be utilized as a precursor to generate other second messengers: inositol 1,4,5-trisphosphate (IP3), diacylglycerol (DAG) or phosphatidylinositol-3,4,5-trisphosphate (PtdIns(3,4,5)P3/PIP3). PIP5K1A-mediated phosphorylation of PtdIns(4)P is the predominant pathway for PtdIns(4,5)P2 synthesis. Together with PIP5K1A, is required for phagocytosis, both enzymes regulating different types of actin remodeling at sequential steps. Promotes particle attachment by generating the pool of PtdIns(4,5)P2 that induces controlled actin depolymerization to facilitate Fc-gamma-R clustering. Mediates RAC1-dependent reorganization of actin filaments. Required for synaptic vesicle transport. Controls the plasma membrane pool of PtdIns(4,5)P2 implicated in synaptic vesicle endocytosis and exocytosis. Plays a role in endocytosis mediated by clathrin and AP-2 (adaptor protein complex 2). Required for clathrin-coated pits assembly at the synapse. Participates in cell junction assembly. Modulates adherens junctions formation by facilitating CDH1/cadherin trafficking. Required for focal adhesion dynamics. Modulates the targeting of talins (TLN1 and TLN2) to the plasma membrane and their efficient assembly into focal adhesions. Regulates the interaction between talins (TLN1 and TLN2) and beta-integrins. Required for uropodium formation and retraction of the cell rear during directed migration. Has a role in growth factor-stimulated directional cell migration and adhesion. Required for talin assembly into nascent adhesions forming at the leading edge toward the direction of the growth factor. Negative regulator of T-cell activation and adhesion. Negatively regulates integrin alpha-L/beta-2 (LFA-1) polarization and adhesion induced by T-cell receptor. Together with PIP5K1A has a role during embryogenesis and together with PIP5K1B may have a role immediately after birth. In Rattus norvegicus (Rat), this protein is Phosphatidylinositol 4-phosphate 5-kinase type-1 gamma.